The chain runs to 358 residues: 3-dehydroquinate synthase (358 aa).

Residues 102 to 106 (GVVGD), 126 to 127 (TT), Lys138, and Lys147 each bind NAD(+). The Zn(2+) site is built by Glu180, His243, and His260.

Belongs to the sugar phosphate cyclases superfamily. Dehydroquinate synthase family. Requires Co(2+) as cofactor. The cofactor is Zn(2+). NAD(+) is required as a cofactor.

Its subcellular location is the cytoplasm. It carries out the reaction 7-phospho-2-dehydro-3-deoxy-D-arabino-heptonate = 3-dehydroquinate + phosphate. It participates in metabolic intermediate biosynthesis; chorismate biosynthesis; chorismate from D-erythrose 4-phosphate and phosphoenolpyruvate: step 2/7. Its function is as follows. Catalyzes the conversion of 3-deoxy-D-arabino-heptulosonate 7-phosphate (DAHP) to dehydroquinate (DHQ). This is 3-dehydroquinate synthase from Shouchella clausii (strain KSM-K16) (Alkalihalobacillus clausii).